The chain runs to 633 residues: Phospholipid--sterol O-acyltransferase (633 aa).

The Cytoplasmic portion of the chain corresponds to 1–6 (MGANSK). The helical; Signal-anchor for type II membrane protein transmembrane segment at 7–29 (SVTASFTVIAVFFLICGGRTAVE) threads the bilayer. At 30 to 633 (DETEFHGDYS…TSANMLLQYI (604 aa)) the chain is on the lumenal side. The active-site Acyl-ester intermediate is Ser195. Active-site charge relay system residues include Asp461 and His505.

Belongs to the AB hydrolase superfamily. Lipase family.

The protein localises to the microsome membrane. Involved in lipid catabolism. Essential for sterol esters biosynthesis in leaves and seeds, but not in flowers. Plays a role in controlling the free sterol content of leaves. Catalyzes the transacylation of acyl groups from phospholipids to a variety of different sterols. Prefers phosphatidylethanolamine over phosphatidylcholine as an acyl donor. Not active toward neutral lipids. Highly specific for position sn-2, which in plant lipids is essentially devoid of saturated acyl groups. Broad sterol specificity (cholesterol &gt; campesterol &gt; sitosterol &gt; stigmasterol), but no activity with lupeol or beta-amyrin. This is Phospholipid--sterol O-acyltransferase (PSAT) from Arabidopsis thaliana (Mouse-ear cress).